The primary structure comprises 352 residues: MDYQVSSPTYDIDYYTSEPCQKIKVKQIAARLLPPLYSLVFIFGFVGNILVVLILINCKRLKSMTDIYLLNLAISDLLFLLTVPFWAHYAAAQWDFGNTMCQLLTGLYFIGFFSGIFFIILLTIDRYLAIVHAVFALKARTVTFGVVTSVITWVVAVFASLPRIIFTRSQREGLHYTCSSHFPYSQYQFWKNFQTLKIVILGLVLPLLVMVICYSGILKTLLRCRNDKKRHRAVRLIFTIMIVYFLFWAPYNIVLLLNTFQEFFGLNNCSSSNRLDQAMQVTETLGMTHCCINPIIYAFVGEKFRNYLLVFFQKHIAKRFCKCCSIFQQDAPERASSVYTRSTGEQETSVGL.

Over 1–30 (MDYQVSSPTYDIDYYTSEPCQKIKVKQIAA) the chain is Extracellular. Tyrosine 3 is subject to Sulfotyrosine. 2 O-linked (GalNAc...) serine glycosylation sites follow: serine 6 and serine 7. Residues tyrosine 10, tyrosine 14, and tyrosine 15 each carry the sulfotyrosine modification. 2 disulfide bridges follow: cysteine 20-cysteine 269 and cysteine 101-cysteine 178. The helical transmembrane segment at 31–58 (RLLPPLYSLVFIFGFVGNILVVLILINC) threads the bilayer. Residues 59-68 (KRLKSMTDIY) are Cytoplasmic-facing. A helical membrane pass occupies residues 69-89 (LLNLAISDLLFLLTVPFWAHY). Topologically, residues 90–102 (AAAQWDFGNTMCQ) are extracellular. Residues 103–124 (LLTGLYFIGFFSGIFFIILLTI) form a helical membrane-spanning segment. Residues 125 to 141 (DRYLAIVHAVFALKART) lie on the Cytoplasmic side of the membrane. The helical transmembrane segment at 142–166 (VTFGVVTSVITWVVAVFASLPRIIF) threads the bilayer. Topologically, residues 167–198 (TRSQREGLHYTCSSHFPYSQYQFWKNFQTLKI) are extracellular. The helical transmembrane segment at 199 to 218 (VILGLVLPLLVMVICYSGIL) threads the bilayer. The Cytoplasmic segment spans residues 219–235 (KTLLRCRNDKKRHRAVR). Residues 236–260 (LIFTIMIVYFLFWAPYNIVLLLNTF) form a helical membrane-spanning segment. The Extracellular segment spans residues 261-277 (QEFFGLNNCSSSNRLDQ). A helical transmembrane segment spans residues 278 to 301 (AMQVTETLGMTHCCINPIIYAFVG). The Cytoplasmic segment spans residues 302–352 (EKFRNYLLVFFQKHIAKRFCKCCSIFQQDAPERASSVYTRSTGEQETSVGL). 3 S-palmitoyl cysteine lipidation sites follow: cysteine 321, cysteine 323, and cysteine 324. Residues serine 336, serine 337, serine 342, and serine 349 each carry the phosphoserine; by BARK1 modification.

It belongs to the G-protein coupled receptor 1 family. In terms of assembly, interacts with PRAF2. Efficient ligand binding to CCL3/MIP-1alpha and CCL4/MIP-1beta requires sulfation, O-glycosylation and sialic acid modifications. Glycosylation on Ser-6 is required for efficient binding of CCL4. Interacts with GRK2. Interacts with ARRB1 and ARRB2. Interacts with CNIH4. Interacts with S100A4; this interaction stimulates T-lymphocyte chemotaxis. Post-translationally, sulfated on at least 2 of the N-terminal tyrosines. Sulfation is required for efficient binding of the chemokines, CCL3 and CCL4. In terms of processing, palmitoylation in the C-terminal is important for cell surface expression. Phosphorylation on serine residues in the C-terminal is stimulated by binding CC chemokines especially by APO-RANTES. Post-translationally, O-glycosylated, but not N-glycosylated. Ser-6 appears to be the major site even if Ser-7 may be also O-glycosylated. Also sialylated glycans present which contribute to chemokine binding. Thr-16 and Ser-17 may also be glycosylated and, if so, with small moieties such as a T-antigen.

The protein resides in the cell membrane. Functionally, receptor for a number of inflammatory CC-chemokines including CCL3/MIP-1-alpha, CCL4/MIP-1-beta and RANTES and subsequently transduces a signal by increasing the intracellular calcium ion level. May play a role in the control of granulocytic lineage proliferation or differentiation. Participates in T-lymphocyte migration to the infection site by acting as a chemotactic receptor. This is C-C chemokine receptor type 5 (CCR5) from Chlorocebus sabaeus (Green monkey).